Here is a 464-residue protein sequence, read N- to C-terminus: MDVAGKKVTVLGGGKSGVAAALLLQQLGATVLLSEHGALSSEAMQRLQAAHIAYEANGHSEQIYSADFCVLSPGIPPTAPVVQQMEAHSIPLYSEIEVASCFCKARMVGITGTDGKTTTSTLIHTLCEADGKRHGYRSYSVGNSGIPFSSMVLAMQPNDVAVIELSSYQLERSISFHPQVSLITNITPDHLDRYGQNMQRYAEAKYRIFMNQQAGDTFIYNQDDSMLQAAFGASQIAVPCRSVAFGLEPLTNVQLDKRRVLVNGNMVVVRQNDGALQPIVAVDEVLNRAFRGKHNLSNVLAAVAVGEALGIGSEVMRQALTAFGGVEHRQELVATIDGVEWINDSKATNVNAMRQALEAVPAPMILIAGGRDKGNNYATVSHLIERKVCLLIATGESREKLASFFKGKVPVIAVPTIDEAVAIAHQQAKAGESVLFSPACASFDMFNNFEERGAFFKQCVRQVL.

Position 112–118 (112–118 (GTDGKTT)) interacts with ATP.

It belongs to the MurCDEF family.

The protein resides in the cytoplasm. The enzyme catalyses UDP-N-acetyl-alpha-D-muramoyl-L-alanine + D-glutamate + ATP = UDP-N-acetyl-alpha-D-muramoyl-L-alanyl-D-glutamate + ADP + phosphate + H(+). It participates in cell wall biogenesis; peptidoglycan biosynthesis. In terms of biological role, cell wall formation. Catalyzes the addition of glutamate to the nucleotide precursor UDP-N-acetylmuramoyl-L-alanine (UMA). This is UDP-N-acetylmuramoylalanine--D-glutamate ligase from Chlorobium chlorochromatii (strain CaD3).